The following is a 216-amino-acid chain: Octanoyltransferase (216 aa).

The 184-residue stretch at 33–216 (AQTADELWIV…AEKLTRHLSG (184 aa)) folds into the BPL/LPL catalytic domain. Substrate contacts are provided by residues 72 to 79 (RGGEVTYH), 148 to 150 (ALG), and 162 to 164 (GVS). Cys180 acts as the Acyl-thioester intermediate in catalysis.

It belongs to the LipB family.

It localises to the cytoplasm. It carries out the reaction octanoyl-[ACP] + L-lysyl-[protein] = N(6)-octanoyl-L-lysyl-[protein] + holo-[ACP] + H(+). It participates in protein modification; protein lipoylation via endogenous pathway; protein N(6)-(lipoyl)lysine from octanoyl-[acyl-carrier-protein]: step 1/2. Functionally, catalyzes the transfer of endogenously produced octanoic acid from octanoyl-acyl-carrier-protein onto the lipoyl domains of lipoate-dependent enzymes. Lipoyl-ACP can also act as a substrate although octanoyl-ACP is likely to be the physiological substrate. This is Octanoyltransferase from Herminiimonas arsenicoxydans.